The following is a 150-amino-acid chain: Endoribonuclease YbeY (150 aa).

Zn(2+) contacts are provided by His-112, His-116, and His-122.

Belongs to the endoribonuclease YbeY family. Zn(2+) serves as cofactor.

The protein localises to the cytoplasm. In terms of biological role, single strand-specific metallo-endoribonuclease involved in late-stage 70S ribosome quality control and in maturation of the 3' terminus of the 16S rRNA. The chain is Endoribonuclease YbeY from Geobacter metallireducens (strain ATCC 53774 / DSM 7210 / GS-15).